The chain runs to 310 residues: Ribose-phosphate pyrophosphokinase (310 aa).

Residues 34–36 (DQE) and 93–94 (RQ) contribute to the ATP site. 2 residues coordinate Mg(2+): H127 and D167. The active site involves K190. Residues R192, D216, and 220 to 224 (DSGGT) contribute to the D-ribose 5-phosphate site.

The protein belongs to the ribose-phosphate pyrophosphokinase family. Class I subfamily. Homohexamer. It depends on Mg(2+) as a cofactor.

It localises to the cytoplasm. It catalyses the reaction D-ribose 5-phosphate + ATP = 5-phospho-alpha-D-ribose 1-diphosphate + AMP + H(+). The protein operates within metabolic intermediate biosynthesis; 5-phospho-alpha-D-ribose 1-diphosphate biosynthesis; 5-phospho-alpha-D-ribose 1-diphosphate from D-ribose 5-phosphate (route I): step 1/1. In terms of biological role, involved in the biosynthesis of the central metabolite phospho-alpha-D-ribosyl-1-pyrophosphate (PRPP) via the transfer of pyrophosphoryl group from ATP to 1-hydroxyl of ribose-5-phosphate (Rib-5-P). The polypeptide is Ribose-phosphate pyrophosphokinase (Agrobacterium fabrum (strain C58 / ATCC 33970) (Agrobacterium tumefaciens (strain C58))).